The sequence spans 494 residues: UPF0164 protein TP_0859/TP_0860 (494 aa).

Residues 1 to 44 (MVRRPCVSAAPVRVGGRLVFGFARVGSRGLCLGALLLSPRIVLA) form the signal peptide.

This sequence belongs to the UPF0164 family.

In Treponema pallidum (strain Nichols), this protein is UPF0164 protein TP_0859/TP_0860.